Reading from the N-terminus, the 846-residue chain is Matrin-3 (846 aa).

Residue Ser-2 is modified to N-acetylserine. Lys-3 is modified (N6-acetyllysine; alternate). Lys-3 participates in a covalent cross-link: Glycyl lysine isopeptide (Lys-Gly) (interchain with G-Cter in SUMO2); alternate. Residues Ser-4, Ser-9, Ser-14, Ser-22, Ser-41, Ser-118, and Ser-126 each carry the phosphoserine modification. Glycyl lysine isopeptide (Lys-Gly) (interchain with G-Cter in SUMO2) cross-links involve residues Lys-132 and Lys-146. Disordered regions lie at residues 147 to 174 and 187 to 213; these read RRRT…YRVP and DSFD…ESGY. Thr-150 carries the post-translational modification Phosphothreonine. The residue at position 157 (Ser-157) is a Phosphoserine. Residue Tyr-158 is modified to Phosphotyrosine. The segment covering 160-174 has biased composition (basic and acidic residues); sequence RDGRSATREPPYRVP. Phosphoserine occurs at positions 164, 188, and 195. A compositionally biased stretch (basic and acidic residues) spans 201 to 213; that stretch reads DYDHGSRSQESGY. Position 202 is a phosphotyrosine (Tyr-202). Phosphoserine occurs at positions 206, 208, and 211. The residue at position 219 (Tyr-219) is a Phosphotyrosine. Residue Ser-234 is modified to Phosphoserine. A Glycyl lysine isopeptide (Lys-Gly) (interchain with G-Cter in SUMO2) cross-link involves residue Lys-245. The residue at position 264 (Ser-264) is a Phosphoserine. Residue Lys-269 forms a Glycyl lysine isopeptide (Lys-Gly) (interchain with G-Cter in SUMO2) linkage. Ser-275 carries the post-translational modification Phosphoserine. Residues 342–394 form a disordered region; that stretch reads PFMLQQSTNPAPGILGPPPPSFHLGGPAVGPRGNLGAGNGNLQGPRHMQKGRV. An RRM 1 domain is found at 398-473; the sequence is RVVHIMDFQR…KPVRVHLSQK (76 aa). Glycyl lysine isopeptide (Lys-Gly) (interchain with G-Cter in SUMO2) cross-links involve residues Lys-478, Lys-487, and Lys-491. The RRM 2 domain occupies 496–571; that stretch reads RVIHLSNLPH…RCVKVDLSEK (76 aa). 2 positions are modified to phosphoserine: Ser-509 and Ser-511. A Glycyl lysine isopeptide (Lys-Gly) (interchain with G-Cter in SUMO2) cross-link involves residue Lys-515. Lys-522 carries the N6-acetyllysine; alternate modification. A Glycyl lysine isopeptide (Lys-Gly) (interchain with G-Cter in SUMO2); alternate cross-link involves residue Lys-522. Ser-533 is subject to Phosphoserine. Residues Lys-554 and Lys-555 each participate in a glycyl lysine isopeptide (Lys-Gly) (interchain with G-Cter in SUMO2) cross-link. Position 571 is an N6-acetyllysine (Lys-571). The tract at residues 588-779 is disordered; sequence KKDKSRKRSY…EDYTIPDEYR (192 aa). Phosphoserine is present on residues Ser-596, Ser-598, Ser-604, and Ser-606. Basic and acidic residues predominate over residues 600–642; it reads DGKESPSDKKSKTDAQKTESPAEGKEQEEKSGEDGEKDTKDDQ. Glycyl lysine isopeptide (Lys-Gly) (interchain with G-Cter in SUMO2) cross-links involve residues Lys-616 and Lys-629. Positions 652 to 664 are enriched in acidic residues; that stretch reads ESEDELLVDEEEA. A phosphoserine mark is found at Ser-653, Ser-670, Ser-672, and Ser-673. Residues 665–675 show a composition bias toward low complexity; that stretch reads AALLESGSSVG. The residue at position 678 (Thr-678) is a Phosphothreonine. The residue at position 688 (Ser-688) is a Phosphoserine. Residues 688-703 are compositionally biased toward basic and acidic residues; the sequence is SDGKKEPSDKAVKKDP. The Nuclear localization signal signature appears at 709-717; it reads SKKKLKKVD. Residues Lys-718 and Lys-735 each participate in a glycyl lysine isopeptide (Lys-Gly) (interchain with G-Cter in SUMO2) cross-link. Thr-740 is subject to Phosphothreonine. Phosphoserine is present on residues Ser-746 and Ser-758. Over residues 766–779 the composition is skewed to basic and acidic residues; sequence DENKEDYTIPDEYR. Lys-769 participates in a covalent cross-link: Glycyl lysine isopeptide (Lys-Gly) (interchain with G-Cter in SUMO2). Residues 800–831 form a Matrin-type zinc finger; that stretch reads FYCKLCSLFYTNEEVAKNTHCSSLPHYQKLKK. Lys-835 carries the post-translational modification N6-acetyllysine; alternate. Lys-835 participates in a covalent cross-link: Glycyl lysine isopeptide (Lys-Gly) (interchain with G-Cter in SUMO2); alternate.

As to quaternary structure, part of a complex consisting of SFPQ, NONO and MATR3. Interacts with AGO1 and AGO2. Part of a complex composed at least of ASH2L, EMSY, HCFC1, HSPA8, CCAR2, MATR3, MKI67, RBBP5, TUBB2A, WDR5 and ZNF335; this complex may have a histone H3-specific methyltransferase activity. Interacts with TARDBP. Part of the HDP-RNP complex composed of at least HEXIM1, PRKDC, XRCC5, XRCC6, paraspeckle proteins (SFPQ, NONO, PSPC1, RBM14, and MATR3) and NEAT1 RNA. Interacts with FUS. Interacts with IGF2BP1. Interacts with IGF2BP2 and IGF2BP3. Interacts with RBPMS.

It is found in the nucleus matrix. May play a role in transcription or may interact with other nuclear matrix proteins to form the internal fibrogranular network. In association with the SFPQ-NONO heteromer may play a role in nuclear retention of defective RNAs. Plays a role in the regulation of DNA virus-mediated innate immune response by assembling into the HDP-RNP complex, a complex that serves as a platform for IRF3 phosphorylation and subsequent innate immune response activation through the cGAS-STING pathway. Binds to N6-methyladenosine (m6A)-containing mRNAs and contributes to MYC stability by binding to m6A-containing MYC mRNAs. May bind to specific miRNA hairpins. The sequence is that of Matrin-3 (Matr3) from Mus musculus (Mouse).